Reading from the N-terminus, the 421-residue chain is MFSFFRRKKKQETPALEEAQIQETAAKAESELAQIVENIKEDAESLAESVKGQVESAVETVSGAVEQVKETVAEMLSEAEEAAEKAAEQVEAAKEAVAETVGEAVGQVQEAVATTEEHKLGWAARLKQGLTKSRDKMAKSLAGVFGGGQIDEDLYEELETVLITSDMGMEATEYLMKDVRDRVSLKGLKDGNELRGALKEALYDLIKPLEKPLVLPETKEPFVIMLAGINGAGKTTSIGKLAKYFQAQGKSVLLAAGDTFRAAAREQLQAWGERNNVTVISQTTGDSAAVCFDAVQAAKARGIDIVLADTAGRLPTQLHLMEEIKKVKRVLQKAMPDAPHEIIVVLDANIGQNAVNQVKAFDDALGLTGLIVTKLDGTAKGGILAALASDRPVPVRYIGVGEGIDDLRPFDARAFVDALLD.

Residues 228–235 (GINGAGKT), 309–313 (DTAGR), and 373–376 (TKLD) each bind GTP.

The protein belongs to the GTP-binding SRP family. FtsY subfamily. In terms of assembly, part of the signal recognition particle protein translocation system, which is composed of SRP and FtsY. SRP is a ribonucleoprotein composed of Ffh and a 4.5S RNA molecule.

Its subcellular location is the cell inner membrane. The protein localises to the cytoplasm. It catalyses the reaction GTP + H2O = GDP + phosphate + H(+). In terms of biological role, involved in targeting and insertion of nascent membrane proteins into the cytoplasmic membrane. Acts as a receptor for the complex formed by the signal recognition particle (SRP) and the ribosome-nascent chain (RNC). Interaction with SRP-RNC leads to the transfer of the RNC complex to the Sec translocase for insertion into the membrane, the hydrolysis of GTP by both Ffh and FtsY, and the dissociation of the SRP-FtsY complex into the individual components. This is Signal recognition particle receptor FtsY from Neisseria meningitidis serogroup B (strain ATCC BAA-335 / MC58).